The chain runs to 529 residues: Cytochrome P450 monooxygenase 45 (529 aa).

A helical membrane pass occupies residues 24–44 (VLTICILALLTFVLREIVLYF). 2 N-linked (GlcNAc...) asparagine glycosylation sites follow: Asn185 and Asn322. Cys454 is a binding site for heme.

It belongs to the cytochrome P450 family. Heme serves as cofactor.

The protein localises to the membrane. It functions in the pathway secondary metabolite biosynthesis. Its function is as follows. Cytochrome P450 monooxygenase that is able to use trans-stilbene as a substrate for oxidation. This is Cytochrome P450 monooxygenase 45 from Postia placenta (strain ATCC 44394 / Madison 698-R) (Brown rot fungus).